A 95-amino-acid polypeptide reads, in one-letter code: MALERCDVEKIAHLARLGLNEGELPRITDALNSILGLVDQMQAVDTTGIEPLAHPLEASQRLRPDQVTESNQRDAYQAIAPKTESGLYLVPKVIE.

This sequence belongs to the GatC family. As to quaternary structure, heterotrimer of A, B and C subunits.

The enzyme catalyses L-glutamyl-tRNA(Gln) + L-glutamine + ATP + H2O = L-glutaminyl-tRNA(Gln) + L-glutamate + ADP + phosphate + H(+). The catalysed reaction is L-aspartyl-tRNA(Asn) + L-glutamine + ATP + H2O = L-asparaginyl-tRNA(Asn) + L-glutamate + ADP + phosphate + 2 H(+). Allows the formation of correctly charged Asn-tRNA(Asn) or Gln-tRNA(Gln) through the transamidation of misacylated Asp-tRNA(Asn) or Glu-tRNA(Gln) in organisms which lack either or both of asparaginyl-tRNA or glutaminyl-tRNA synthetases. The reaction takes place in the presence of glutamine and ATP through an activated phospho-Asp-tRNA(Asn) or phospho-Glu-tRNA(Gln). The protein is Aspartyl/glutamyl-tRNA(Asn/Gln) amidotransferase subunit C of Pseudomonas putida (strain W619).